The following is a 398-amino-acid chain: 1-deoxy-D-xylulose 5-phosphate reductoisomerase (398 aa).

Residues T10, G11, S12, V13, G36, R37, N38, and N124 each contribute to the NADPH site. 1-deoxy-D-xylulose 5-phosphate is bound at residue K125. E126 is an NADPH binding site. D150 provides a ligand contact to Mn(2+). Residues S151, E152, S186, and H209 each contribute to the 1-deoxy-D-xylulose 5-phosphate site. A Mn(2+)-binding site is contributed by E152. G215 is a binding site for NADPH. 1-deoxy-D-xylulose 5-phosphate contacts are provided by S222, N227, K228, and E231. E231 lines the Mn(2+) pocket.

The protein belongs to the DXR family. In terms of assembly, homodimer. It depends on Mg(2+) as a cofactor. Requires Mn(2+) as cofactor.

The catalysed reaction is 2-C-methyl-D-erythritol 4-phosphate + NADP(+) = 1-deoxy-D-xylulose 5-phosphate + NADPH + H(+). Its pathway is isoprenoid biosynthesis; isopentenyl diphosphate biosynthesis via DXP pathway; isopentenyl diphosphate from 1-deoxy-D-xylulose 5-phosphate: step 1/6. In terms of biological role, catalyzes the NADPH-dependent rearrangement and reduction of 1-deoxy-D-xylulose-5-phosphate (DXP) to 2-C-methyl-D-erythritol 4-phosphate (MEP). This chain is 1-deoxy-D-xylulose 5-phosphate reductoisomerase, found in Serratia proteamaculans (strain 568).